Here is a 210-residue protein sequence, read N- to C-terminus: MKLKKKMLTLLLTASMSFGLFGATSSAATDYWQYWTDGGGMVNAVNGPGGNYSVTWQNTGNFVVGKGWTVGSPNRVINYNAGIWEPSGNGYLTLYGWTRNALIEYYVVDSWGTYRPTGNYKGTVNSDGGTYDIYTTMRYNAPSIDGTQTFQQFWSVRQSKRPTGSNVSITFSNHVNAWRSKGMNLGSSWAYQVLATEGYQSSGRSNVTVW.

An N-terminal signal peptide occupies residues Met-1 to Gly-19. The GH11 domain occupies Leu-20–Trp-210. The Nucleophile role is filled by Glu-104. Glu-197 functions as the Proton donor in the catalytic mechanism.

This sequence belongs to the glycosyl hydrolase 11 (cellulase G) family.

The catalysed reaction is Endohydrolysis of (1-&gt;4)-beta-D-xylosidic linkages in xylans.. It functions in the pathway glycan degradation; xylan degradation. This Geobacillus stearothermophilus (Bacillus stearothermophilus) protein is Endo-1,4-beta-xylanase A (xynA).